Consider the following 299-residue polypeptide: Release factor glutamine methyltransferase (299 aa).

Residues 134-138 (GTGSG), Asp-157, Trp-186, and Asn-203 each bind S-adenosyl-L-methionine. Residue 203–206 (NPPY) participates in substrate binding.

It belongs to the protein N5-glutamine methyltransferase family. PrmC subfamily.

It catalyses the reaction L-glutaminyl-[peptide chain release factor] + S-adenosyl-L-methionine = N(5)-methyl-L-glutaminyl-[peptide chain release factor] + S-adenosyl-L-homocysteine + H(+). Its function is as follows. Methylates the class 1 translation termination release factors RF1/PrfA and RF2/PrfB on the glutamine residue of the universally conserved GGQ motif. This Synechocystis sp. (strain ATCC 27184 / PCC 6803 / Kazusa) protein is Release factor glutamine methyltransferase.